The chain runs to 421 residues: Proton/sodium-glutamate symport protein (421 aa).

The Cytoplasmic segment spans residues 1–3 (MRK). Residues 4-24 (IGLAWQIFIGLILGIIVGAIF) form a helical membrane-spanning segment. The Extracellular segment spans residues 25-43 (YGNPKVATYLQPIGDIFLR). Residues 44–64 (LIKMIVIPIVISSLVVGVASV) traverse the membrane as a helical segment. The Cytoplasmic portion of the chain corresponds to 65-77 (GDLKKLGKLGGKT). The chain crosses the membrane as a helical span at residues 78–98 (IIYFEIITTIAIVVGLLAANI). Over 99 to 148 (FQPGTGVNMKSLEKTDIQSYVDTTNEVQHHSMVETFVNIVPKNIFESLTK) the chain is Extracellular. The helical transmembrane segment at 149–169 (GDMLPIIFFSVMFGLGVAAIG) threads the bilayer. The Cytoplasmic portion of the chain corresponds to 170–198 (EKGKPVLQFFQGTAEAMFYVTNQIMKFAP). Residues 199-219 (FGVFALIGVTVSKFGVESLIP) form a helical membrane-spanning segment. Residues 220–222 (LSK) lie on the Extracellular side of the membrane. A helical membrane pass occupies residues 223 to 243 (LVIVVYATMVFFIFVVLGGVA). A topological domain (cytoplasmic) is located at residue Lys244. The chain crosses the membrane as a helical span at residues 245–265 (LFGINIFHIIKILKDELILAY). The Extracellular segment spans residues 266–306 (STASSETVLPKIMEKMENFGCPKAITSFVIPTGYSFNLDGS). The helical transmembrane segment at 307–327 (TLYQALAAIFIAQLYGIDMPI) threads the bilayer. The Cytoplasmic portion of the chain corresponds to 328 to 330 (SQQ). 2 helical membrane passes run 331-351 (ISLL…PGVS) and 352-372 (FVVL…LAFI). The Cytoplasmic segment spans residues 373-421 (AGIDRILDMARTAVNVIGNSLAAIIMSKWEGQYNEEKGKQYIAQLQQSA).

It belongs to the dicarboxylate/amino acid:cation symporter (DAACS) (TC 2.A.23) family. Homotrimer.

It is found in the cell membrane. In terms of biological role, this carrier protein is part of the Na(+)-dependent, binding-protein-independent glutamate-aspartate transport system. The sequence is that of Proton/sodium-glutamate symport protein (gltT) from Geobacillus stearothermophilus (Bacillus stearothermophilus).